The sequence spans 344 residues: uncharacterized protein (344 aa).

A run of 6 helical transmembrane segments spans residues 155–175, 181–201, 221–241, 254–274, 291–311, and 319–339; these read IARITLAPLGMIFLVYSIFLV, WGLGGIIFFLGVYFMVKAYGW, LSFIFYVTSAILLIISIVNGF, ISSFIFYSTWWFVLSGIFALL, FTIIFLLIAFGLIVWASAAYV, and ALQNLAGAIVGAILIAAIGVF.

To M.jannaschii MJ1032.

The protein resides in the cell membrane. This is an uncharacterized protein from Archaeoglobus fulgidus (strain ATCC 49558 / DSM 4304 / JCM 9628 / NBRC 100126 / VC-16).